The following is a 193-amino-acid chain: MRLSDRDIELWIKNKKLVIEPIPNKELIHGVTIDVRLGNEFYTFCNKFNKNIDLSKSRNEISKILKKVMNKKHIIPNDHVFLLKPGMFVLAITLEKIFLPNNLVGWLDGRSSLARLGLMIHATSHRIDPGWGGNIVLEFFNSSNMILSLCPGMLIAAVSFEILSSPSIRPYNIRKNAKYFNQSEVTFSRIDQD.

Residues 110–115, Asp128, 136–138, Tyr171, Lys178, and Gln182 contribute to the dCTP site; these read RSSLAR and VLE. The active-site Proton donor/acceptor is Glu138.

Belongs to the dCTP deaminase family. In terms of assembly, homotrimer.

The catalysed reaction is dCTP + H2O + H(+) = dUTP + NH4(+). It participates in pyrimidine metabolism; dUMP biosynthesis; dUMP from dCTP (dUTP route): step 1/2. Functionally, catalyzes the deamination of dCTP to dUTP. This chain is dCTP deaminase, found in Buchnera aphidicola subsp. Baizongia pistaciae (strain Bp).